Reading from the N-terminus, the 418-residue chain is uncharacterized protein (418 aa).

It belongs to the poxviruses C4/C10 family.

This is an uncharacterized protein from Fowlpox virus (strain NVSL) (FPV).